Reading from the N-terminus, the 171-residue chain is Nicotinamide-nucleotide adenylyltransferase (171 aa).

This sequence belongs to the archaeal NMN adenylyltransferase family.

It is found in the cytoplasm. It carries out the reaction beta-nicotinamide D-ribonucleotide + ATP + H(+) = diphosphate + NAD(+). It functions in the pathway cofactor biosynthesis; NAD(+) biosynthesis; NAD(+) from nicotinamide D-ribonucleotide: step 1/1. The chain is Nicotinamide-nucleotide adenylyltransferase from Methanococcus maripaludis (strain DSM 14266 / JCM 13030 / NBRC 101832 / S2 / LL).